The sequence spans 505 residues: tRNA (guanine(6)-N(2))-methyltransferase THUMP3 (505 aa).

A disordered region spans residues lysine 145–serine 182. The segment covering glycine 156–glycine 173 has biased composition (basic and acidic residues). The 117-residue stretch at lysine 171–leucine 287 folds into the THUMP domain.

Belongs to the methyltransferase superfamily. In terms of assembly, part of the heterodimeric THUMPD3-TRM112 methyltransferase complex; this complex forms an active tRNA methyltransferase, where TRMT112 acts as an activator of the catalytic subunit THUMPD3. As to expression, ubiquitously expressed. Abundantly expressed in the testis, also expressed in the brain, heart, kidney, liver, lung, muscle and spleen.

Its subcellular location is the cytoplasm. The catalysed reaction is guanosine(6) in tRNA + S-adenosyl-L-methionine = N(2)-methylguanosine(6) in tRNA + S-adenosyl-L-homocysteine + H(+). It catalyses the reaction guanosine(7) in tRNA + S-adenosyl-L-methionine = N(2)-methylguanosine(7) in tRNA + S-adenosyl-L-homocysteine + H(+). In terms of biological role, catalytic subunit of the THUMPD3-TRM112 methyltransferase complex, that specifically mediates the S-adenosyl-L-methionine-dependent N(2)-methylation of guanosine nucleotide at position 6 (m2G6) in tRNAs. This is one of the major tRNA (guanine-N(2))-methyltransferases. Also catalyzes the S-adenosyl-L-methionine-dependent N(2)-methylation of guanosine nucleotide at position 7 of tRNA(Trp). The protein is tRNA (guanine(6)-N(2))-methyltransferase THUMP3 of Mus musculus (Mouse).